The chain runs to 192 residues: Potassium-transporting ATPase KdpC subunit (192 aa).

A helical transmembrane segment spans residues 14–34; sequence LTGVLVVLCGLIYPAMVTGIA.

This sequence belongs to the KdpC family. The system is composed of three essential subunits: KdpA, KdpB and KdpC.

It is found in the cell membrane. In terms of biological role, part of the high-affinity ATP-driven potassium transport (or Kdp) system, which catalyzes the hydrolysis of ATP coupled with the electrogenic transport of potassium into the cytoplasm. This subunit acts as a catalytic chaperone that increases the ATP-binding affinity of the ATP-hydrolyzing subunit KdpB by the formation of a transient KdpB/KdpC/ATP ternary complex. This chain is Potassium-transporting ATPase KdpC subunit, found in Bacillus cytotoxicus (strain DSM 22905 / CIP 110041 / 391-98 / NVH 391-98).